The following is a 264-amino-acid chain: ATP synthase subunit a (264 aa).

The next 6 membrane-spanning stretches (helical) occupy residues 29–49 (TWHI…LWLF), 89–109 (VIAP…FMDM), 134–154 (DLNI…YYSI), 177–197 (IPVN…SLAL), 208–228 (LIFI…ALGV), and 235–255 (LIFH…LTIV).

This sequence belongs to the ATPase A chain family. As to quaternary structure, F-type ATPases have 2 components, CF(1) - the catalytic core - and CF(0) - the membrane proton channel. CF(1) has five subunits: alpha(3), beta(3), gamma(1), delta(1), epsilon(1). CF(0) has three main subunits: a(1), b(2) and c(9-12). The alpha and beta chains form an alternating ring which encloses part of the gamma chain. CF(1) is attached to CF(0) by a central stalk formed by the gamma and epsilon chains, while a peripheral stalk is formed by the delta and b chains.

It is found in the cell inner membrane. Functionally, key component of the proton channel; it plays a direct role in the translocation of protons across the membrane. The protein is ATP synthase subunit a of Shewanella sediminis (strain HAW-EB3).